The following is a 216-amino-acid chain: Uracil phosphoribosyltransferase (216 aa).

30-34 lines the GTP pocket; sequence KNLVK. Residues Arg-80, Arg-105, and 140-148 contribute to the 5-phospho-alpha-D-ribose 1-diphosphate site; that span reads DPMIATGST. Residues Ile-203 and 208-210 contribute to the uracil site; that span reads GDA. A 5-phospho-alpha-D-ribose 1-diphosphate-binding site is contributed by Asp-209.

Belongs to the UPRTase family. Requires Mg(2+) as cofactor.

The catalysed reaction is UMP + diphosphate = 5-phospho-alpha-D-ribose 1-diphosphate + uracil. It participates in pyrimidine metabolism; UMP biosynthesis via salvage pathway; UMP from uracil: step 1/1. Its activity is regulated as follows. Allosterically activated by GTP. Catalyzes the conversion of uracil and 5-phospho-alpha-D-ribose 1-diphosphate (PRPP) to UMP and diphosphate. The polypeptide is Uracil phosphoribosyltransferase (Sulfolobus acidocaldarius (strain ATCC 33909 / DSM 639 / JCM 8929 / NBRC 15157 / NCIMB 11770)).